We begin with the raw amino-acid sequence, 415 residues long: Tyrosine-protein phosphatase non-receptor type 2 (415 aa).

Residues 5 to 275 (IEREFEELDT…RFSYMAIIEG (271 aa)) form the Tyrosine-protein phosphatase domain. Position 22 is a phosphotyrosine (Tyr-22). At Ser-52 the chain carries Phosphoserine. Tyr-68 bears the Phosphotyrosine mark. Residues Asp-182, 216-222 (CSAGIGR), and Gln-260 contribute to the substrate site. Cys-216 functions as the Phosphocysteine intermediate in the catalytic mechanism. Position 216 is an S-nitrosocysteine (Cys-216). Ser-293, Ser-298, and Ser-304 each carry phosphoserine. The endoplasmic reticulum location stretch occupies residues 346-415 (ESALRKRIRE…WTLFFQQNAL (70 aa)). Residues 376–415 (ERKRKRWLYWQPILTKMGFMSVILVGAFVGWTLFFQQNAL) are mediates interaction with STX17.

It belongs to the protein-tyrosine phosphatase family. Non-receptor class 1 subfamily. As to quaternary structure, interacts with RMDN3. Isoform 1 interacts with TMED9. Isoform 1 interacts with STX17; dephosphorylates STX17. Interacts with ITGA1 (via cytoplasmic domain); activates the phosphatase activity towards EGFR. Interacts with TRAF2; probably involved in tumor necrosis factor-mediated signaling. Interacts with MET. Interacts with FAM220A and STAT3; interaction with FAM220A promotes interaction of PTPN2 with transcriptional activator STAT3, leading to dephosphorylation of STAT3 by PTPN2 and negative regulation of STAT3 transcriptional activator activity. Post-translationally, specifically phosphorylated in a cell cycle-dependent manner by cyclin-dependent kinases CDK1 and CDK2. Probably activated through phosphorylation by PKR. Ubiquitously expressed. Isoform 2 is probably the major isoform. Isoform 1 is expressed in T-cells and in placenta.

Its subcellular location is the endoplasmic reticulum. The protein localises to the endoplasmic reticulum-Golgi intermediate compartment. It localises to the nucleus. The protein resides in the cytoplasm. It is found in the cell membrane. The catalysed reaction is O-phospho-L-tyrosyl-[protein] + H2O = L-tyrosyl-[protein] + phosphate. Its function is as follows. Non-receptor type tyrosine-specific phosphatase that dephosphorylates receptor protein tyrosine kinases including INSR, EGFR, CSF1R, PDGFR. Also dephosphorylates non-receptor protein tyrosine kinases like JAK1, JAK2, JAK3, Src family kinases, STAT1, STAT3 and STAT6 either in the nucleus or the cytoplasm. Negatively regulates numerous signaling pathways and biological processes like hematopoiesis, inflammatory response, cell proliferation and differentiation, and glucose homeostasis. Plays a multifaceted and important role in the development of the immune system. Functions in T-cell receptor signaling through dephosphorylation of FYN and LCK to control T-cells differentiation and activation. Dephosphorylates CSF1R, negatively regulating its downstream signaling and macrophage differentiation. Negatively regulates cytokine (IL2/interleukin-2 and interferon)-mediated signaling through dephosphorylation of the cytoplasmic kinases JAK1, JAK3 and their substrate STAT1, that propagate signaling downstream of the cytokine receptors. Also regulates the IL6/interleukin-6 and IL4/interleukin-4 cytokine signaling through dephosphorylation of STAT3 and STAT6 respectively. In addition to the immune system, it is involved in anchorage-dependent, negative regulation of EGF-stimulated cell growth. Activated by the integrin ITGA1/ITGB1, it dephosphorylates EGFR and negatively regulates EGF signaling. Dephosphorylates PDGFRB and negatively regulates platelet-derived growth factor receptor-beta signaling pathway and therefore cell proliferation. Negatively regulates tumor necrosis factor-mediated signaling downstream via MAPK through SRC dephosphorylation. May also regulate the hepatocyte growth factor receptor signaling pathway through dephosphorylation of the hepatocyte growth factor receptor MET. Also plays an important role in glucose homeostasis. For instance, negatively regulates the insulin receptor signaling pathway through the dephosphorylation of INSR and control gluconeogenesis and liver glucose production through negative regulation of the IL6 signaling pathways. May also bind DNA. This chain is Tyrosine-protein phosphatase non-receptor type 2 (PTPN2), found in Homo sapiens (Human).